The following is a 133-amino-acid chain: Small ribosomal subunit protein uS8 (133 aa).

It belongs to the universal ribosomal protein uS8 family. Part of the 30S ribosomal subunit.

In terms of biological role, one of the primary rRNA binding proteins, it binds directly to 16S rRNA central domain where it helps coordinate assembly of the platform of the 30S subunit. The polypeptide is Small ribosomal subunit protein uS8 (Ignicoccus hospitalis (strain KIN4/I / DSM 18386 / JCM 14125)).